We begin with the raw amino-acid sequence, 285 residues long: Bifunctional protein FolD (285 aa).

Residues 166-168 (GAS) and isoleucine 232 contribute to the NADP(+) site.

This sequence belongs to the tetrahydrofolate dehydrogenase/cyclohydrolase family. Homodimer.

It carries out the reaction (6R)-5,10-methylene-5,6,7,8-tetrahydrofolate + NADP(+) = (6R)-5,10-methenyltetrahydrofolate + NADPH. The catalysed reaction is (6R)-5,10-methenyltetrahydrofolate + H2O = (6R)-10-formyltetrahydrofolate + H(+). It functions in the pathway one-carbon metabolism; tetrahydrofolate interconversion. Functionally, catalyzes the oxidation of 5,10-methylenetetrahydrofolate to 5,10-methenyltetrahydrofolate and then the hydrolysis of 5,10-methenyltetrahydrofolate to 10-formyltetrahydrofolate. The chain is Bifunctional protein FolD from Aliivibrio salmonicida (strain LFI1238) (Vibrio salmonicida (strain LFI1238)).